Consider the following 37-residue polypeptide: Large ribosomal subunit protein bL36 (37 aa).

It belongs to the bacterial ribosomal protein bL36 family.

This chain is Large ribosomal subunit protein bL36, found in Dictyoglomus thermophilum (strain ATCC 35947 / DSM 3960 / H-6-12).